We begin with the raw amino-acid sequence, 303 residues long: Glycine--tRNA ligase alpha subunit (303 aa).

Belongs to the class-II aminoacyl-tRNA synthetase family. Tetramer of two alpha and two beta subunits.

Its subcellular location is the cytoplasm. The enzyme catalyses tRNA(Gly) + glycine + ATP = glycyl-tRNA(Gly) + AMP + diphosphate. In Helicobacter pylori (strain ATCC 700392 / 26695) (Campylobacter pylori), this protein is Glycine--tRNA ligase alpha subunit (glyQ).